A 399-amino-acid polypeptide reads, in one-letter code: Syndecan (399 aa).

Positions 1 to 28 are cleaved as a signal peptide; the sequence is MKPKQKISVEPLLLVAILIGVLVAATHA. Residues 28-319 are disordered; it reads AQDQKSVKPS…TKGIDHRPNG (292 aa). Residues 29–340 are Extracellular-facing; that stretch reads QDQKSVKPSA…TSSFFSQPGI (312 aa). A compositionally biased stretch (low complexity) spans 36–46; the sequence is PSAAAPSAAAS. O-linked (Xyl...) (glycosaminoglycan) serine glycosylation is present at serine 62. Over residues 67 to 77 the composition is skewed to basic and acidic residues; sequence GIHEDLEKDPD. O-linked (Xyl...) (glycosaminoglycan) serine glycosylation is found at serine 79, serine 81, and serine 110. Residues 99–116 are compositionally biased toward polar residues; sequence SHNTRISQSSNSGINTAH. Residues 117-172 show a composition bias toward low complexity; that stretch reads TPTQTSSTIPTTSTSTPMPTTTPTATTPASTTTAAATQISSFANSSSTTTTTLAPT. Residue asparagine 160 is glycosylated (N-linked (GlcNAc...) asparagine). Acidic residues predominate over residues 191-214; sequence TESSGDGIDADAEDDDEDDGDDKD. Serine 194 carries an O-linked (Xyl...) (glycosaminoglycan) serine glycan. The span at 215-226 shows a compositional bias: basic and acidic residues; it reads YDYNKELDKEID. A compositionally biased stretch (acidic residues) spans 253–270; it reads DEIDVDGGDEDDNGDSDI. Over residues 299-309 the composition is skewed to polar residues; that stretch reads PNTNVNSQPSD. Residues 341 to 365 form a helical membrane-spanning segment; the sequence is LAAVIGGAVVGLLCAILVVMFIVYR. Topologically, residues 366–399 are cytoplasmic; the sequence is MRKKDEGSYALDEPKRSPANNSYAKNANNREFYA. The tract at residues 373-399 is disordered; that stretch reads SYALDEPKRSPANNSYAKNANNREFYA. Residues 383 to 399 show a composition bias toward polar residues; sequence PANNSYAKNANNREFYA.

It belongs to the syndecan proteoglycan family. As to expression, in 13-16 hours embryos, expressed in lymph glands, peripheral and central nervous system and basal surfaces of gut epithelia. Sdc and robo are coexpressed in domains adjacent to slit; in tracheal pits and midline glia cells.

It is found in the membrane. Its function is as follows. Cell surface proteoglycan that bears heparan sulfate. Required for axonal and myotube guidance, is a necessary component of slit/robo signaling and is required in the slit target cells. The protein is Syndecan (Sdc) of Drosophila melanogaster (Fruit fly).